Consider the following 441-residue polypeptide: Arginine biosynthesis bifunctional protein ArgJ, mitochondrial (441 aa).

Substrate contacts are provided by T178, K204, T215, E304, N436, and S441. T215 acts as the Nucleophile in catalysis.

The protein belongs to the ArgJ family. In terms of assembly, heterodimer of an alpha and a beta chain. Post-translationally, the alpha and beta chains are autoproteolytically processed from a single precursor protein within the mitochondrion.

It localises to the mitochondrion matrix. It carries out the reaction N(2)-acetyl-L-ornithine + L-glutamate = N-acetyl-L-glutamate + L-ornithine. The catalysed reaction is L-glutamate + acetyl-CoA = N-acetyl-L-glutamate + CoA + H(+). It functions in the pathway amino-acid biosynthesis; L-arginine biosynthesis; L-ornithine and N-acetyl-L-glutamate from L-glutamate and N(2)-acetyl-L-ornithine (cyclic): step 1/1. Its pathway is amino-acid biosynthesis; L-arginine biosynthesis; N(2)-acetyl-L-ornithine from L-glutamate: step 1/4. Functionally, catalyzes two activities which are involved in the cyclic version of arginine biosynthesis: the synthesis of acetylglutamate from glutamate and acetyl-CoA, and of ornithine by transacetylation between acetylornithine and glutamate. The polypeptide is Arginine biosynthesis bifunctional protein ArgJ, mitochondrial (Lodderomyces elongisporus (strain ATCC 11503 / CBS 2605 / JCM 1781 / NBRC 1676 / NRRL YB-4239) (Yeast)).